A 354-amino-acid chain; its full sequence is Type II secretion system protein K (354 aa).

The propeptide at 1 to 7 (MSRRQRG) is leader sequence. The helical transmembrane segment at 8–28 (VALLIVMLMLSLMVTIAASIT) threads the bilayer. Over 29–354 (ERSGKAWQRT…QYGGYRTVNP (326 aa)) the chain is Periplasmic. Positions 114-151 (NVTPNNASGNNTSGNNNAANGSSGNGNSPQPPKVGTSE) are disordered. Positions 118–141 (NNASGNNTSGNNNAANGSSGNGNS) are enriched in low complexity.

This sequence belongs to the GSP K family. In terms of assembly, type II secretion is composed of four main components: the outer membrane complex, the inner membrane complex, the cytoplasmic secretion ATPase and the periplasm-spanning pseudopilus. Interacts with core component OutG. Post-translationally, cleaved by prepilin peptidase.

Its subcellular location is the cell inner membrane. Functionally, component of the type II secretion system required for the energy-dependent secretion of extracellular factors such as proteases and toxins from the periplasm. Plays a role in pseudopilus assembly and seems to control its length. Interacts with the pseudopilus tip complex that is critical for the recognition and binding of secretion substrates. This chain is Type II secretion system protein K (outK), found in Dickeya chrysanthemi (Pectobacterium chrysanthemi).